The primary structure comprises 543 residues: Terpineol synthase, chloroplastic (543 aa).

Residues 1-22 (MNTEPSPNHYSAISSSDQNLTR) are disordered. Positions 263, 300, 304, 435, and 438 each coordinate (2E)-geranyl diphosphate. Mg(2+) is bound by residues D300 and D304. The DDXXD motif motif lies at 300-304 (DDVYD). Positions 438, 442, and 446 each coordinate Mg(2+).

This sequence belongs to the terpene synthase family. Tpsb subfamily. As to quaternary structure, monomer. The cofactor is Mg(2+). Requires Mn(2+) as cofactor. As to expression, confined to flowers.

It localises to the plastid. Its subcellular location is the chloroplast. The enzyme catalyses (2E)-geranyl diphosphate + H2O = (S)-alpha-terpineol + diphosphate. It catalyses the reaction (2E)-geranyl diphosphate = sabinene + diphosphate. It carries out the reaction (2E)-geranyl diphosphate = beta-myrcene + diphosphate. The catalysed reaction is (2E)-geranyl diphosphate = limonene + diphosphate. The enzyme catalyses (2E)-geranyl diphosphate + H2O = 1,8-cineole + diphosphate. The protein operates within secondary metabolite biosynthesis; terpenoid biosynthesis. In terms of biological role, monoterpene synthase (TPS) involved in the biosynthesis of monoterpene natural products of the 'cineole cassette', volatile compounds present in floral scent. Catalyzes the conversion of (2E)-geranyl diphosphate (GPP) into alpha-terpineol and, as minor products, sabinene, beta-myrcene, limonene and 1,8-cineole. The polypeptide is Terpineol synthase, chloroplastic (Nicotiana alata (Winged tobacco)).